A 121-amino-acid polypeptide reads, in one-letter code: Small basic protein (121 aa).

Transmembrane regions (helical) follow at residues 2 to 22 (WLPV…NLTI), 29 to 49 (YLSL…RAHL), and 57 to 77 (VFVS…FLGV).

It belongs to the sbp family.

Its subcellular location is the cell membrane. The protein is Small basic protein (sbp) of Bacillus subtilis (strain 168).